The chain runs to 467 residues: Megakaryocyte-associated tyrosine-protein kinase (467 aa).

The segment at 1-20 (MPTQRWAPGTQCMTKCENSR) is disordered. Residues 7-69 (APGTQCMTKC…AAAALRQREA (63 aa)) enclose the SH3 domain. The SH2 domain maps to 81–170 (WFHGKISGQE…AICTKLVKPK (90 aa)). One can recognise a Protein kinase domain in the interval 194-443 (LTLGAQIGEG…IVEKLGRELR (250 aa)). ATP is bound by residues 200–208 (IGEGEFGAV) and Lys221. Asp311 acts as the Proton acceptor in catalysis. A disordered region spans residues 445-467 (VGVAAPAGGQEAEGSAPTRSQDP).

The protein belongs to the protein kinase superfamily. Tyr protein kinase family. CSK subfamily. In terms of assembly, interacts with KIT. In terms of tissue distribution, enriched in lymphoid tissues.

The protein localises to the cytoplasm. It is found in the membrane. It carries out the reaction L-tyrosyl-[protein] + ATP = O-phospho-L-tyrosyl-[protein] + ADP + H(+). Functionally, could play a significant role in the signal transduction of hematopoietic cells. May regulate tyrosine kinase activity of SRC-family members in brain. The chain is Megakaryocyte-associated tyrosine-protein kinase (Matk) from Rattus norvegicus (Rat).